We begin with the raw amino-acid sequence, 119 residues long: Protein TusC (119 aa).

Belongs to the DsrF/TusC family. In terms of assembly, heterohexamer, formed by a dimer of trimers. The hexameric TusBCD complex contains 2 copies each of TusB, TusC and TusD. The TusBCD complex interacts with TusE.

The protein localises to the cytoplasm. Its function is as follows. Part of a sulfur-relay system required for 2-thiolation of 5-methylaminomethyl-2-thiouridine (mnm(5)s(2)U) at tRNA wobble positions. The protein is Protein TusC of Klebsiella pneumoniae subsp. pneumoniae (strain ATCC 700721 / MGH 78578).